A 266-amino-acid chain; its full sequence is Ribosomal RNA small subunit methyltransferase A (266 aa).

S-adenosyl-L-methionine contacts are provided by Asn-13, Leu-15, Gly-40, Glu-61, Asp-86, and Asn-110.

It belongs to the class I-like SAM-binding methyltransferase superfamily. rRNA adenine N(6)-methyltransferase family. RsmA subfamily.

It is found in the cytoplasm. It carries out the reaction adenosine(1518)/adenosine(1519) in 16S rRNA + 4 S-adenosyl-L-methionine = N(6)-dimethyladenosine(1518)/N(6)-dimethyladenosine(1519) in 16S rRNA + 4 S-adenosyl-L-homocysteine + 4 H(+). Specifically dimethylates two adjacent adenosines (A1518 and A1519) in the loop of a conserved hairpin near the 3'-end of 16S rRNA in the 30S particle. May play a critical role in biogenesis of 30S subunits. This is Ribosomal RNA small subunit methyltransferase A from Hydrogenovibrio crunogenus (strain DSM 25203 / XCL-2) (Thiomicrospira crunogena).